Reading from the N-terminus, the 359-residue chain is GTP 3',8-cyclase (359 aa).

The Radical SAM core domain maps to 33–260; the sequence is RFGRRHDSLR…PTGRENPSAP (228 aa). Arg42 is a binding site for GTP. Residues Cys49 and Cys53 each coordinate [4Fe-4S] cluster. Tyr55 serves as a coordination point for S-adenosyl-L-methionine. Cys56 contributes to the [4Fe-4S] cluster binding site. GTP is bound at residue Arg93. Gly97 lines the S-adenosyl-L-methionine pocket. Thr124 is a binding site for GTP. Ser148 serves as a coordination point for S-adenosyl-L-methionine. Lys185 provides a ligand contact to GTP. Position 219 (Met219) interacts with S-adenosyl-L-methionine. [4Fe-4S] cluster is bound by residues Cys286 and Cys289. 291 to 293 lines the GTP pocket; that stretch reads RLR. Cys303 provides a ligand contact to [4Fe-4S] cluster.

The protein belongs to the radical SAM superfamily. MoaA family. As to quaternary structure, monomer and homodimer. Requires [4Fe-4S] cluster as cofactor.

The catalysed reaction is GTP + AH2 + S-adenosyl-L-methionine = (8S)-3',8-cyclo-7,8-dihydroguanosine 5'-triphosphate + 5'-deoxyadenosine + L-methionine + A + H(+). It functions in the pathway cofactor biosynthesis; molybdopterin biosynthesis. Catalyzes the cyclization of GTP to (8S)-3',8-cyclo-7,8-dihydroguanosine 5'-triphosphate. The sequence is that of GTP 3',8-cyclase from Rhodopirellula baltica (strain DSM 10527 / NCIMB 13988 / SH1).